A 243-amino-acid chain; its full sequence is UPF0246 protein SpyM51747 (243 aa).

It belongs to the UPF0246 family.

In Streptococcus pyogenes serotype M5 (strain Manfredo), this protein is UPF0246 protein SpyM51747.